We begin with the raw amino-acid sequence, 179 residues long: Peptidyl-tRNA hydrolase (179 aa).

Y14 serves as a coordination point for tRNA. H19 (proton acceptor) is an active-site residue. Residues Y60, N62, and N108 each coordinate tRNA.

Belongs to the PTH family. As to quaternary structure, monomer.

Its subcellular location is the cytoplasm. The enzyme catalyses an N-acyl-L-alpha-aminoacyl-tRNA + H2O = an N-acyl-L-amino acid + a tRNA + H(+). Hydrolyzes ribosome-free peptidyl-tRNAs (with 1 or more amino acids incorporated), which drop off the ribosome during protein synthesis, or as a result of ribosome stalling. In terms of biological role, catalyzes the release of premature peptidyl moieties from peptidyl-tRNA molecules trapped in stalled 50S ribosomal subunits, and thus maintains levels of free tRNAs and 50S ribosomes. The protein is Peptidyl-tRNA hydrolase of Mycoplasma mobile (strain ATCC 43663 / 163K / NCTC 11711) (Mesomycoplasma mobile).